Here is an 829-residue protein sequence, read N- to C-terminus: UBA domain-containing protein 8 (829 aa).

One can recognise an EH 1 domain in the interval E10 to K109. The EF-hand 1 domain maps to L43–A78. Residues G93–F121 form a disordered region. Phosphoserine occurs at positions 112 and 113. 2 EH domains span residues E129 to E225 and D300 to T398. Residues L333–R368 enclose the EF-hand 2 domain. 2 stretches are compositionally biased toward polar residues: residues S466–I506 and T574–E590. Disordered regions lie at residues S466–S520, T574–L614, and K724–E785. Residues E602–S709 adopt a coiled-coil conformation. Residues T728–T737 are compositionally biased toward pro residues. Over residues H764 to V774 the composition is skewed to polar residues. A compositionally biased stretch (low complexity) spans S775–E785. The region spanning Q788–S828 is the UBA domain.

This Schizosaccharomyces pombe (strain 972 / ATCC 24843) (Fission yeast) protein is UBA domain-containing protein 8 (ucp8).